The chain runs to 501 residues: ATP synthase subunit alpha (501 aa).

169 to 176 provides a ligand contact to ATP; that stretch reads GDRQTGKT.

It belongs to the ATPase alpha/beta chains family. In terms of assembly, F-type ATPases have 2 components, CF(1) - the catalytic core - and CF(0) - the membrane proton channel. CF(1) has five subunits: alpha(3), beta(3), gamma(1), delta(1), epsilon(1). CF(0) has three main subunits: a(1), b(2) and c(9-12). The alpha and beta chains form an alternating ring which encloses part of the gamma chain. CF(1) is attached to CF(0) by a central stalk formed by the gamma and epsilon chains, while a peripheral stalk is formed by the delta and b chains.

Its subcellular location is the cell membrane. It catalyses the reaction ATP + H2O + 4 H(+)(in) = ADP + phosphate + 5 H(+)(out). Produces ATP from ADP in the presence of a proton gradient across the membrane. The alpha chain is a regulatory subunit. This Streptococcus uberis (strain ATCC BAA-854 / 0140J) protein is ATP synthase subunit alpha.